Consider the following 198-residue polypeptide: Secreted RxLR effector protein PITG_22926 (198 aa).

The signal sequence occupies residues 1–20; sequence MLRSFLLIVATVSLFGQCKP. The short motif at 43-52 is the RxLR-dEER element; the sequence is RFLRTNDEER.

The protein belongs to the RxLR effector family. In terms of assembly, interacts with host MAP3Kbeta2 in the nucleoplasm.

Its subcellular location is the secreted. It localises to the host nucleus. The protein localises to the host nucleolus. Functionally, secreted effector that promotes P.infestans colonization of plant host. Specifically suppresses Avr4/Cf4- and AvrPto/Pto-triggered cell death. Targets the potato MAP3Kbeta2 kinase, a positive regulator of cell death associated with plant immunity, and perturbs signaling pathways triggered by MAP3Kbeta2. This Phytophthora infestans (strain T30-4) (Potato late blight agent) protein is Secreted RxLR effector protein PITG_22926.